A 101-amino-acid polypeptide reads, in one-letter code: Small ribosomal subunit protein uS14 (101 aa).

The protein belongs to the universal ribosomal protein uS14 family. Part of the 30S ribosomal subunit. Contacts proteins S3 and S10.

Binds 16S rRNA, required for the assembly of 30S particles and may also be responsible for determining the conformation of the 16S rRNA at the A site. This Burkholderia multivorans (strain ATCC 17616 / 249) protein is Small ribosomal subunit protein uS14.